An 878-amino-acid chain; its full sequence is Leucine--tRNA ligase (878 aa).

Positions Pro-43–His-54 match the 'HIGH' region motif. The short motif at Lys-634–Ala-638 is the 'KMSKS' region element. Lys-637 serves as a coordination point for ATP.

This sequence belongs to the class-I aminoacyl-tRNA synthetase family.

The protein localises to the cytoplasm. It catalyses the reaction tRNA(Leu) + L-leucine + ATP = L-leucyl-tRNA(Leu) + AMP + diphosphate. The sequence is that of Leucine--tRNA ligase from Treponema pallidum subsp. pallidum (strain SS14).